The following is a 406-amino-acid chain: Tyrosine--tRNA ligase (406 aa).

Tyr-35 provides a ligand contact to L-tyrosine. A 'HIGH' region motif is present at residues 40-49 (ATSTSLHIGH). L-tyrosine contacts are provided by Tyr-166 and Gln-170. The 'KMSKS' region signature appears at 226-230 (KMGKS). ATP is bound at residue Lys-229. Residues 341 to 405 (ILLVDLMVSS…IGKKKILRII (65 aa)) form the S4 RNA-binding domain.

This sequence belongs to the class-I aminoacyl-tRNA synthetase family. TyrS type 1 subfamily. In terms of assembly, homodimer.

The protein localises to the cytoplasm. It carries out the reaction tRNA(Tyr) + L-tyrosine + ATP = L-tyrosyl-tRNA(Tyr) + AMP + diphosphate + H(+). In terms of biological role, catalyzes the attachment of tyrosine to tRNA(Tyr) in a two-step reaction: tyrosine is first activated by ATP to form Tyr-AMP and then transferred to the acceptor end of tRNA(Tyr). In Borrelia hermsii (strain HS1 / DAH), this protein is Tyrosine--tRNA ligase.